The sequence spans 332 residues: Probable class II chitinase ARB_00204 (332 aa).

Residues M1–A18 form the signal peptide. In terms of domain architecture, GH18 spans D19–F331. Residue E118 is the Proton donor of the active site. Residue N245 is glycosylated (N-linked (GlcNAc...) asparagine).

It belongs to the glycosyl hydrolase 18 family. Chitinase class II subfamily.

The protein resides in the secreted. The catalysed reaction is Random endo-hydrolysis of N-acetyl-beta-D-glucosaminide (1-&gt;4)-beta-linkages in chitin and chitodextrins.. Functionally, degrades chitin and chitotriose. The polypeptide is Probable class II chitinase ARB_00204 (Arthroderma benhamiae (strain ATCC MYA-4681 / CBS 112371) (Trichophyton mentagrophytes)).